A 480-amino-acid polypeptide reads, in one-letter code: Glutamyl-tRNA(Gln) amidotransferase subunit A (480 aa).

Active-site charge relay system residues include lysine 70 and serine 145. Catalysis depends on serine 169, which acts as the Acyl-ester intermediate.

The protein belongs to the amidase family. GatA subfamily. Heterotrimer of A, B and C subunits.

The enzyme catalyses L-glutamyl-tRNA(Gln) + L-glutamine + ATP + H2O = L-glutaminyl-tRNA(Gln) + L-glutamate + ADP + phosphate + H(+). In terms of biological role, allows the formation of correctly charged Gln-tRNA(Gln) through the transamidation of misacylated Glu-tRNA(Gln) in organisms which lack glutaminyl-tRNA synthetase. The reaction takes place in the presence of glutamine and ATP through an activated gamma-phospho-Glu-tRNA(Gln). In Lactobacillus delbrueckii subsp. bulgaricus (strain ATCC 11842 / DSM 20081 / BCRC 10696 / JCM 1002 / NBRC 13953 / NCIMB 11778 / NCTC 12712 / WDCM 00102 / Lb 14), this protein is Glutamyl-tRNA(Gln) amidotransferase subunit A.